Here is a 792-residue protein sequence, read N- to C-terminus: Vicilin Car i 2.0101 (792 aa).

Residues 1–26 form the signal peptide; that stretch reads MVTKAKIPLFLFLSALFLALVCSSLA. Disordered regions lie at residues 132–153, 182–217, 240–272, 302–325, and 350–394; these read ERRE…DPRE, RFEE…YRQC, ERLE…EQRY, EERE…CQRR, and QQGR…ESGE. Basic and acidic residues-rich tracts occupy residues 182–200 and 207–217; these read RFEE…RGRD and PRDPREQYRQC. Basic and acidic residues predominate over residues 302 to 314; it reads EERERQRGRDRQD. The span at 315–325 shows a compositional bias: low complexity; sequence PQQQYHRCQRR. A compositionally biased stretch (basic and acidic residues) spans 350 to 375; it reads QQGREWGPDQASPRRESRGREEEQQR. Tyrosine 379 lines the Cu cation pocket. Cupin type-1 domains lie at 384-537 and 582-754; these read QGLR…DRLE and ISLK…EEIE. The Cu cation site is built by cysteine 652, histidine 654, and histidine 698. The stretch at 727–754 forms a coiled coil; that stretch reads LAGQNNIINQLEREAKELSFNMPREEIE.

The protein belongs to the 7S seed storage protein family. In terms of assembly, homotrimer. In terms of tissue distribution, expressed in seed (at protein level). Expressed in seed.

Seed storage protein. This is Vicilin Car i 2.0101 from Carya illinoinensis (Pecan).